The sequence spans 466 residues: Transcription factor SOX-10 (466 aa).

Disordered regions lie at residues 1–67, 160–198, 213–275, 355–375, and 433–466; these read MAEE…DDDK, LRMQ…TDQG, DHRH…DFGN, QVKT…QPST, and RPLY…LSRP. The segment covering 23-32 has biased composition (low complexity); it reads LSPSSAPSLG. Position 24 is a phosphoserine (Ser-24). The interval 62–102 is dimerization (DIM); that stretch reads EADDDKFPVCIREAVSQVLSGYDWTLVPMPVRVNGASKSKP. A DNA-binding region (HMG box) is located at residues 104–172; that stretch reads VKRPMNAFMV…QHKKDHPDYK (69 aa). Basic and acidic residues-rich tracts occupy residues 160–173 and 254–271; these read LRMQ…DYKY and ADPK…KPHI. The tract at residues 228 to 310 is transactivation domain (TAM); that stretch reads PEHPSGQSHG…LPPNGHPGHV (83 aa). The segment at 353–466 is transactivation domain (TAC); sequence KAQVKTETTG…QPVYTTLSRP (114 aa). The segment covering 440 to 466 has biased composition (polar residues); that stretch reads SDPSPSGPQSHSPTHWEQPVYTTLSRP.

As to quaternary structure, monomer. Interacts with Armcx3 at the mitochondrial outer membrane surface. Interacts with PAX3. Predominant expression in glial cells of the nervous system.

Its subcellular location is the cytoplasm. It localises to the nucleus. The protein localises to the mitochondrion outer membrane. Transcription factor that plays a central role in developing and mature glia. Specifically activates expression of myelin genes, during oligodendrocyte (OL) maturation, such as DUSP15 and MYRF, thereby playing a central role in oligodendrocyte maturation and CNS myelination. Once induced, MYRF cooperates with SOX10 to implement the myelination program. Transcriptional activator of MITF, acting synergistically with PAX3. Transcriptional activator of MBP, via binding to the gene promoter. The chain is Transcription factor SOX-10 (Sox10) from Rattus norvegicus (Rat).